The primary structure comprises 257 residues: Zinc transporter ZupT (257 aa).

3 helical membrane passes run 5–25 (LILT…GVLG), 32–52 (LLAF…LMEM), and 61–81 (GMSP…YFGL). Fe(2+) contacts are provided by Asn-120 and Glu-123. Zn(2+) is bound by residues Glu-123 and His-148. Transmembrane regions (helical) follow at residues 137-157 (LGFG…LAVA), 171-191 (ILWA…AWLI), 195-215 (MISP…MVAL), and 236-256 (GVLC…TVGI). Fe(2+) contacts are provided by Asn-149, Glu-152, and Glu-181. Glu-152 serves as a coordination point for Zn(2+).

Belongs to the ZIP transporter (TC 2.A.5) family. ZupT subfamily.

Its subcellular location is the cell inner membrane. It catalyses the reaction Zn(2+)(in) = Zn(2+)(out). Mediates zinc uptake. May also transport other divalent cations. The polypeptide is Zinc transporter ZupT (Escherichia coli O81 (strain ED1a)).